The primary structure comprises 270 residues: 5'-AMP-activated protein kinase subunit beta-1 (270 aa).

Residues M1–A44 are disordered. G2 is lipidated: N-myristoyl glycine. A Phosphothreonine modification is found at T4. 2 positions are modified to phosphoserine: S5 and S6. The segment covering A9 to I36 has biased composition (basic and acidic residues). T19 carries the post-translational modification Phosphothreonine. Residues S24 and S25 each carry the phosphoserine; by autocatalysis modification. Phosphoserine occurs at positions 40, 96, and 101. Residues E68–F163 are glycogen-binding domain. S108 bears the Phosphoserine; by autocatalysis mark. A Phosphothreonine modification is found at T148. S182 carries the phosphoserine modification. K201 is modified (N6-succinyllysine).

The protein belongs to the 5'-AMP-activated protein kinase beta subunit family. AMPK is a heterotrimer of an alpha catalytic subunit (PRKAA1 or PRKAA2), a beta (PRKAB1 or PRKAB2) and a gamma non-catalytic subunits (PRKAG1, PRKAG2 or PRKAG3). Interacts with FNIP1 and FNIP2. Post-translationally, phosphorylated when associated with the catalytic subunit (PRKAA1 or PRKAA2). Phosphorylated by ULK1; leading to negatively regulate AMPK activity and suggesting the existence of a regulatory feedback loop between ULK1 and AMPK.

Functionally, non-catalytic subunit of AMP-activated protein kinase (AMPK), an energy sensor protein kinase that plays a key role in regulating cellular energy metabolism. In response to reduction of intracellular ATP levels, AMPK activates energy-producing pathways and inhibits energy-consuming processes: inhibits protein, carbohydrate and lipid biosynthesis, as well as cell growth and proliferation. AMPK acts via direct phosphorylation of metabolic enzymes, and by longer-term effects via phosphorylation of transcription regulators. Also acts as a regulator of cellular polarity by remodeling the actin cytoskeleton; probably by indirectly activating myosin. Beta non-catalytic subunit acts as a scaffold on which the AMPK complex assembles, via its C-terminus that bridges alpha (PRKAA1 or PRKAA2) and gamma subunits (PRKAG1, PRKAG2 or PRKAG3). The chain is 5'-AMP-activated protein kinase subunit beta-1 (Prkab1) from Mus musculus (Mouse).